A 456-amino-acid polypeptide reads, in one-letter code: Outer membrane protein assembly factor BamB (456 aa).

An N-terminal signal peptide occupies residues 1-19; the sequence is MKKLLFITAPLLLSVLTAS. A lipid anchor (N-palmitoyl cysteine) is attached at cysteine 20. The S-diacylglycerol cysteine moiety is linked to residue cysteine 20.

This sequence belongs to the BamB family. Part of the Bam complex.

Its subcellular location is the cell outer membrane. Part of the outer membrane protein assembly complex, which is involved in assembly and insertion of beta-barrel proteins into the outer membrane. In Francisella tularensis subsp. tularensis (strain SCHU S4 / Schu 4), this protein is Outer membrane protein assembly factor BamB.